The chain runs to 456 residues: Ribulose bisphosphate carboxylase large chain (456 aa).

Lys7 is modified (N6,N6,N6-trimethyllysine). Residues Asn116 and Thr166 each coordinate substrate. Residue Lys168 is the Proton acceptor of the active site. Residue Lys170 participates in substrate binding. Mg(2+)-binding residues include Lys194, Asp196, and Glu197. Lys194 carries the N6-carboxylysine modification. His287 acts as the Proton acceptor in catalysis. Substrate contacts are provided by Arg288, His320, and Ser372.

It belongs to the RuBisCO large chain family. Type I subfamily. In terms of assembly, heterohexadecamer of 8 large chains and 8 small chains; disulfide-linked. The disulfide link is formed within the large subunit homodimers. Requires Mg(2+) as cofactor. The disulfide bond which can form in the large chain dimeric partners within the hexadecamer appears to be associated with oxidative stress and protein turnover.

It is found in the plastid. The protein localises to the chloroplast. The enzyme catalyses 2 (2R)-3-phosphoglycerate + 2 H(+) = D-ribulose 1,5-bisphosphate + CO2 + H2O. The catalysed reaction is D-ribulose 1,5-bisphosphate + O2 = 2-phosphoglycolate + (2R)-3-phosphoglycerate + 2 H(+). Functionally, ruBisCO catalyzes two reactions: the carboxylation of D-ribulose 1,5-bisphosphate, the primary event in carbon dioxide fixation, as well as the oxidative fragmentation of the pentose substrate in the photorespiration process. Both reactions occur simultaneously and in competition at the same active site. The chain is Ribulose bisphosphate carboxylase large chain from Barnardia japonica (Chinese squill).